A 430-amino-acid polypeptide reads, in one-letter code: Oleandomycin glycosyltransferase (430 aa).

The interval 385–430 is disordered; sequence GGTRRAADLIEAELPARHERQEPVGDRPNVGDRPAGVRSDRQRSAL. Positions 386–409 are enriched in basic and acidic residues; it reads GTRRAADLIEAELPARHERQEPVG.

Belongs to the UDP-glycosyltransferase family.

Its function is as follows. Specifically inactivates oleandomycin via 2'-O-glycosylation using UDP-glucose. This chain is Oleandomycin glycosyltransferase (oleD), found in Streptomyces antibioticus.